The chain runs to 157 residues: Probable Brix domain-containing ribosomal biogenesis protein (157 aa).

Residues 1 to 157 enclose the Brix domain; sequence MLVTSSRKPS…KLNLRGFKKY (157 aa).

In terms of biological role, probably involved in the biogenesis of the ribosome. In Methanosarcina barkeri (strain Fusaro / DSM 804), this protein is Probable Brix domain-containing ribosomal biogenesis protein.